We begin with the raw amino-acid sequence, 278 residues long: Ribosomal RNA small subunit methyltransferase A (278 aa).

Residues Asn27, Leu29, Gly54, Glu75, Asp95, and Asn118 each coordinate S-adenosyl-L-methionine.

This sequence belongs to the class I-like SAM-binding methyltransferase superfamily. rRNA adenine N(6)-methyltransferase family. RsmA subfamily.

It localises to the cytoplasm. The catalysed reaction is adenosine(1518)/adenosine(1519) in 16S rRNA + 4 S-adenosyl-L-methionine = N(6)-dimethyladenosine(1518)/N(6)-dimethyladenosine(1519) in 16S rRNA + 4 S-adenosyl-L-homocysteine + 4 H(+). Functionally, specifically dimethylates two adjacent adenosines (A1518 and A1519) in the loop of a conserved hairpin near the 3'-end of 16S rRNA in the 30S particle. May play a critical role in biogenesis of 30S subunits. In Chlamydia abortus (strain DSM 27085 / S26/3) (Chlamydophila abortus), this protein is Ribosomal RNA small subunit methyltransferase A.